Here is a 411-residue protein sequence, read N- to C-terminus: Zinc metalloproteinase/disintegrin (411 aa).

The signal sequence occupies residues 1-20 (MIEVLLVTICLAVFPYQGSS). A propeptide spanning residues 21 to 190 (IILESGNVND…KASQLYLTPE (170 aa)) is cleaved from the precursor. Residues 197-395 (RYVKLAIVVD…SKPQCILNAP (199 aa)) form the Peptidase M12B domain. D284 is a Ca(2+) binding site. Cystine bridges form between C308–C390, C352–C374, and C354–C357. Position 333 (H333) interacts with Zn(2+). The active site involves E334. Residues H337 and H343 each coordinate Zn(2+). Residues C390 and N393 each coordinate Ca(2+). The propeptide occupies 396-411 (LRTDTVSTPVSGNEPL).

This sequence belongs to the venom metalloproteinase (M12B) family. P-II subfamily. Monomer. It depends on Zn(2+) as a cofactor. Expressed by the venom gland.

The protein resides in the secreted. In terms of biological role, snake venom metalloproteinase that impairs hemostasis in the envenomed animal. This is Zinc metalloproteinase/disintegrin from Protobothrops mucrosquamatus (Taiwan habu).